The following is a 70-amino-acid chain: Large ribosomal subunit protein bL31 (70 aa).

Lys-8 bears the N6-acetyllysine mark. Zn(2+) is bound by residues Cys-16, Cys-18, Cys-37, and Cys-40.

Belongs to the bacterial ribosomal protein bL31 family. Type A subfamily. As to quaternary structure, part of the 50S ribosomal subunit. The cofactor is Zn(2+).

Its function is as follows. Binds the 23S rRNA. This Shigella flexneri protein is Large ribosomal subunit protein bL31.